The following is a 214-amino-acid chain: Adenylate kinase (214 aa).

10–15 (GAGKGT) is a binding site for ATP. The interval 30-59 (STGDMLRAAIKAGTELGKQAKSVIDAGQLV) is NMP. AMP-binding positions include threonine 31, arginine 36, 57–59 (QLV), 85–88 (GFPR), and glutamine 92. The segment at 122–159 (GRRAHLPSGRTYHNVYNPPKEEGKDDITGEELVVRDDD) is LID. Residues arginine 123 and 132-133 (TY) each bind ATP. Residues arginine 156 and arginine 167 each contribute to the AMP site. Lysine 200 contributes to the ATP binding site.

This sequence belongs to the adenylate kinase family. In terms of assembly, monomer.

It localises to the cytoplasm. It carries out the reaction AMP + ATP = 2 ADP. The protein operates within purine metabolism; AMP biosynthesis via salvage pathway; AMP from ADP: step 1/1. Functionally, catalyzes the reversible transfer of the terminal phosphate group between ATP and AMP. Plays an important role in cellular energy homeostasis and in adenine nucleotide metabolism. The chain is Adenylate kinase from Vibrio atlanticus (strain LGP32) (Vibrio splendidus (strain Mel32)).